The chain runs to 234 residues: UDP-2,3-diacylglucosamine hydrolase (234 aa).

Asp9, His11, Asp42, Asn80, and His115 together coordinate Mn(2+). 80 to 81 contacts substrate; it reads NR. Positions 123, 161, 165, 168, and 196 each coordinate substrate. Mn(2+)-binding residues include His196 and His198.

Belongs to the LpxH family. Mn(2+) serves as cofactor.

The protein localises to the cell inner membrane. The enzyme catalyses UDP-2-N,3-O-bis[(3R)-3-hydroxytetradecanoyl]-alpha-D-glucosamine + H2O = 2-N,3-O-bis[(3R)-3-hydroxytetradecanoyl]-alpha-D-glucosaminyl 1-phosphate + UMP + 2 H(+). It functions in the pathway glycolipid biosynthesis; lipid IV(A) biosynthesis; lipid IV(A) from (3R)-3-hydroxytetradecanoyl-[acyl-carrier-protein] and UDP-N-acetyl-alpha-D-glucosamine: step 4/6. Hydrolyzes the pyrophosphate bond of UDP-2,3-diacylglucosamine to yield 2,3-diacylglucosamine 1-phosphate (lipid X) and UMP by catalyzing the attack of water at the alpha-P atom. Involved in the biosynthesis of lipid A, a phosphorylated glycolipid that anchors the lipopolysaccharide to the outer membrane of the cell. This Histophilus somni (strain 2336) (Haemophilus somnus) protein is UDP-2,3-diacylglucosamine hydrolase.